The chain runs to 564 residues: Interactor of constitutive active ROPs 3 (564 aa).

Disordered stretches follow at residues 1–73 (MQTQ…SRIT) and 88–135 (KAKD…SALE). Positions 33–44 (ESSSSPISATNR) are enriched in polar residues. 2 stretches are compositionally biased toward basic and acidic residues: residues 63-73 (VSEKKRPSRIT) and 98-123 (TSKK…KLEE). 2 coiled-coil regions span residues 70–133 (SRIT…ETSA) and 231–514 (AETE…AATA). Ser-533 carries the post-translational modification Phosphoserine.

The protein belongs to the ICR family. In terms of assembly, interacts with ARAC11 in vitro. Expressed in flowers.

Functionally, acts as a scaffold, mediating interaction of ROPs with different proteins. The protein is Interactor of constitutive active ROPs 3 (ICR3) of Arabidopsis thaliana (Mouse-ear cress).